The chain runs to 155 residues: Putative pre-16S rRNA nuclease (155 aa).

Belongs to the YqgF nuclease family.

Its subcellular location is the cytoplasm. In terms of biological role, could be a nuclease involved in processing of the 5'-end of pre-16S rRNA. This Xylella fastidiosa (strain M12) protein is Putative pre-16S rRNA nuclease.